A 231-amino-acid chain; its full sequence is Extracellular deoxyribonuclease (231 aa).

Positions 1–20 (MMIFRFVTTLAASLPLLTFA) are cleaved as a signal peptide.

It belongs to the EndA/NucM nuclease family.

The protein localises to the secreted. This Vibrio cholerae serotype O1 (strain ATCC 39315 / El Tor Inaba N16961) protein is Extracellular deoxyribonuclease (dns).